A 298-amino-acid chain; its full sequence is Probable pyridoxal 5'-phosphate synthase subunit SNZ3 (298 aa).

Asp-21 provides a ligand contact to D-ribose 5-phosphate. Lys-78 functions as the Schiff-base intermediate with D-ribose 5-phosphate in the catalytic mechanism. D-ribose 5-phosphate-binding positions include Gly-150, Gly-213, and 234–235 (GS).

Belongs to the PdxS/SNZ family. In terms of assembly, homohexamer. Interacts with THI11.

The catalysed reaction is aldehydo-D-ribose 5-phosphate + D-glyceraldehyde 3-phosphate + L-glutamine = pyridoxal 5'-phosphate + L-glutamate + phosphate + 3 H2O + H(+). It participates in cofactor biosynthesis; pyridoxal 5'-phosphate biosynthesis. Functionally, catalyzes the formation of pyridoxal 5'-phosphate from ribose 5-phosphate (RBP), glyceraldehyde 3-phosphate (G3P) and ammonia. The ammonia is provided by a SNO isoform. Can also use ribulose 5-phosphate and dihydroxyacetone phosphate as substrates, resulting from enzyme-catalyzed isomerization of RBP and G3P, respectively. The chain is Probable pyridoxal 5'-phosphate synthase subunit SNZ3 (SNZ3) from Saccharomyces cerevisiae (strain ATCC 204508 / S288c) (Baker's yeast).